The primary structure comprises 419 residues: Serine--tRNA ligase (419 aa).

Residue 225–227 (TAE) coordinates L-serine. 256–258 (RKE) provides a ligand contact to ATP. Residue glutamate 279 participates in L-serine binding. 343 to 346 (EISS) is a binding site for ATP. An L-serine-binding site is contributed by serine 378.

This sequence belongs to the class-II aminoacyl-tRNA synthetase family. Type-1 seryl-tRNA synthetase subfamily. In terms of assembly, homodimer. The tRNA molecule binds across the dimer.

It localises to the cytoplasm. It carries out the reaction tRNA(Ser) + L-serine + ATP = L-seryl-tRNA(Ser) + AMP + diphosphate + H(+). It catalyses the reaction tRNA(Sec) + L-serine + ATP = L-seryl-tRNA(Sec) + AMP + diphosphate + H(+). It participates in aminoacyl-tRNA biosynthesis; selenocysteinyl-tRNA(Sec) biosynthesis; L-seryl-tRNA(Sec) from L-serine and tRNA(Sec): step 1/1. Catalyzes the attachment of serine to tRNA(Ser). Is also able to aminoacylate tRNA(Sec) with serine, to form the misacylated tRNA L-seryl-tRNA(Sec), which will be further converted into selenocysteinyl-tRNA(Sec). The chain is Serine--tRNA ligase from Pelagibacter ubique (strain HTCC1062).